The following is a 110-amino-acid chain: CHH-like protein (110 aa).

The N-terminal stretch at 1-23 (MHLSSVQFAWAALVALAVSAAGA) is a signal peptide. A propeptide spanning residues 24–35 (LPSSAPHHVERR) is cleaved from the precursor. 3 disulfide bridges follow: Cys-42/Cys-78, Cys-58/Cys-74, and Cys-61/Cys-87. A Valine amide modification is found at Val-107.

This sequence belongs to the arthropod CHH/MIH/GIH/VIH hormone family.

It localises to the secreted. In Bombyx mori (Silk moth), this protein is CHH-like protein (CHHL).